Reading from the N-terminus, the 303-residue chain is Protoheme IX farnesyltransferase (303 aa).

The next 6 helical transmembrane spans lie at 25 to 45 (MGLV…AIVM), 54 to 74 (IPQI…ACAL), 118 to 138 (CLFL…VGYV), 166 to 186 (IGWV…FLVV), 230 to 250 (LVLL…FVVI), and 280 to 300 (FVYS…VSLI).

Belongs to the UbiA prenyltransferase family. Protoheme IX farnesyltransferase subfamily. Interacts with CtaA.

The protein resides in the cell membrane. It catalyses the reaction heme b + (2E,6E)-farnesyl diphosphate + H2O = Fe(II)-heme o + diphosphate. It functions in the pathway porphyrin-containing compound metabolism; heme O biosynthesis; heme O from protoheme: step 1/1. In terms of biological role, converts heme B (protoheme IX) to heme O by substitution of the vinyl group on carbon 2 of heme B porphyrin ring with a hydroxyethyl farnesyl side group. The polypeptide is Protoheme IX farnesyltransferase (Staphylococcus epidermidis (strain ATCC 12228 / FDA PCI 1200)).